The primary structure comprises 399 residues: Peroxisome assembly protein 12 (399 aa).

The segment at 1 to 24 (MSFYSNLPSAGQSSRGSSTSGRNG) is disordered. Residues 1-33 (MSFYSNLPSAGQSSRGSSTSGRNGVGLEPLYPT) lie on the Peroxisomal matrix side of the membrane. The span at 9–24 (SAGQSSRGSSTSGRNG) shows a compositional bias: low complexity. Residues 34-62 (IFEIMSSQEIDSLLPASIRYLLANHLVAN) form a helical membrane-spanning segment. The Cytoplasmic portion of the chain corresponds to 63-67 (FPNRY). The helical transmembrane segment at 68–92 (TLRLNKYFFEWFQAIKGFVEWYHLK) threads the bilayer. Residues 93–136 (TYNSTFIDRFYGLQLFSSRDRNLALTQCLNPKGQSEWPQGLQLN) are Peroxisomal matrix-facing. The helical transmembrane segment at 137–168 (QQQKSVIFLEKIILPYITAKLDEILEKISMNN) threads the bilayer. Topologically, residues 169 to 171 (IFS) are cytoplasmic. A helical transmembrane segment spans residues 172 to 208 (SDETENKWPKRAFLRIYPFIKKLLALSNLLVKLLFLT). Topologically, residues 209–277 (KRTGSVSLLQ…PRFLTFMGSQ (69 aa)) are peroxisomal matrix. The chain crosses the membrane as a helical span at residues 278–305 (FFPTFIFVLRVYQWWTTQDMTTKLQKRV). The Cytoplasmic segment spans residues 306 to 399 (NDLDEDIPRP…VVTGIRKLLI (94 aa)). C334, C337, C354, and C357 together coordinate Zn(2+). The RING-type; degenerate zinc finger occupies 334–373 (CPVCEKTVQNPCVLETGYVACYPCAISYLVNNEGHCPVTN).

It belongs to the pex2/pex10/pex12 family. In terms of assembly, component of the PEX2-PEX10-PEX12 retrotranslocation channel, composed of PEX2, PEX10 and PEX12.

The protein localises to the peroxisome membrane. It participates in protein modification; protein ubiquitination. In terms of biological role, component of a retrotranslocation channel required for peroxisome organization by mediating export of the PEX5 receptor from peroxisomes to the cytosol, thereby promoting PEX5 recycling. The retrotranslocation channel is composed of PEX2, PEX10 and PEX12; each subunit contributing transmembrane segments that coassemble into an open channel that specifically allows the passage of PEX5 through the peroxisomal membrane. PEX12 also regulates PEX5 recycling by activating the E3 ubiquitin-protein ligase activity of PEX10. When PEX5 recycling is compromised, PEX12 stimulates PEX10-mediated polyubiquitination of PEX5, leading to its subsequent degradation. The protein is Peroxisome assembly protein 12 of Saccharomyces cerevisiae (strain ATCC 204508 / S288c) (Baker's yeast).